Consider the following 155-residue polypeptide: Small ribosomal subunit protein uS7 (155 aa).

Belongs to the universal ribosomal protein uS7 family. Part of the 30S ribosomal subunit. Contacts proteins S9 and S11.

Functionally, one of the primary rRNA binding proteins, it binds directly to 16S rRNA where it nucleates assembly of the head domain of the 30S subunit. Is located at the subunit interface close to the decoding center, probably blocks exit of the E-site tRNA. The chain is Small ribosomal subunit protein uS7 from Mycoplasma capricolum subsp. capricolum (strain California kid / ATCC 27343 / NCTC 10154).